The primary structure comprises 305 residues: Cbb3-type cytochrome c oxidase subunit CcoP2 (305 aa).

2 consecutive transmembrane segments (helical) span residues 4–24 (FWSWYVTLLSLGTIAALVWLL) and 57–77 (WWFMLFVGTVIFALGYLVLYP). Cytochrome c domains follow at residues 130-209 (QALK…RSLS) and 219-300 (VDIE…YSLS). 8 residues coordinate heme c: cysteine 143, cysteine 146, histidine 147, methionine 186, cysteine 232, cysteine 235, histidine 236, and methionine 277.

In terms of assembly, component of the cbb3-type cytochrome c oxidase at least composed of CcoN, CcoO, CcoQ and CcoP. The cofactor is heme c.

It is found in the cell inner membrane. The protein operates within energy metabolism; oxidative phosphorylation. Functionally, C-type cytochrome. Part of the cbb3-type cytochrome c oxidase complex. CcoP subunit is required for transferring electrons from donor cytochrome c via its heme groups to CcoO subunit. From there, electrons are shuttled to the catalytic binuclear center of CcoN subunit where oxygen reduction takes place. The complex also functions as a proton pump. In Stutzerimonas stutzeri (Pseudomonas stutzeri), this protein is Cbb3-type cytochrome c oxidase subunit CcoP2.